Consider the following 180-residue polypeptide: Large ribosomal subunit protein uL6 (180 aa).

It belongs to the universal ribosomal protein uL6 family. Part of the 50S ribosomal subunit.

In terms of biological role, this protein binds to the 23S rRNA, and is important in its secondary structure. It is located near the subunit interface in the base of the L7/L12 stalk, and near the tRNA binding site of the peptidyltransferase center. This is Large ribosomal subunit protein uL6 from Christiangramia forsetii (strain DSM 17595 / CGMCC 1.15422 / KT0803) (Gramella forsetii).